A 719-amino-acid polypeptide reads, in one-letter code: MVSKSFKYPKKHKFEWINETNRVERVGSGLKRVILCPSMELIAILTCSNHLICCRSNSQRIWDVDFHDLEATELCWNHDGNLIVVGFKNGELKIIDSSTGHLVEQRPASRDLAVLMITWAMQETIVNEKRNDFLFDATAYMPLLGTLPSSAKEERIFSSKAIAQFFEPRKREGENNKKVELLSILDERGIRYINMFSSYKIGESDSLKSALNLGVPISHSITNDLAYHVLICKGGTNISLKTLYMPLLKNDLGSIVDIATMSTRMQHLVRYLEEVLNAMYEEFDNVFKSEASFIKTFDALVSKYSDTTFFSLQLELYQFIMNGIPSDLLKEWINERVGDRVLKNWERAMVNSYTSLIIFCQEFVIPACERLTVLLSSARGKSIWGHMKGNTLLDAKLVEDCLATLGYLQNNVFSFLNCLFEEKKYMKHFISWLNYAIVEFNTSEPSSIPPQEIIEHINETVIYIRHSLFRSKLTSYFMGTKPLQLRDPDYYSLKDFANQDDSNSVDDFVSFKTLKESLRDSFNVIFSYPSLTCQKQWLKTGDLVLFEGTDWNVSSLIPKSCNEKNQLFSLFFRKDTPNIFLIISQLMENTMLPVSGCHFGLDYAELLGSSLLDFQPATVLDMKLLNGSSILILGKLKEKCFLCEICLADVPLTFFEHQQKNSYLDAISHLPFIPLNSCLWLHEFEKDFLPSTLEYALSENSDYGVLISRESSRYRLFSF.

A WD repeat occupies Asn57–Asp96.

The APC/C is composed of at least 13 subunits: apc1, apc2, nuc2, apc4, apc5, cut9, apc8, apc10, apc11, hcn1, apc13, apc14 and apc15. Interacts with apc1 and dim1.

Its function is as follows. Component of the anaphase-promoting complex/cyclosome (APC/C), a cell cycle-regulated E3 ubiquitin-protein ligase complex that controls progression through mitosis and the G1 phase of the cell cycle. The APC/C is thought to confer substrate specificity and, in the presence of ubiquitin-conjugating E2 enzymes, it catalyzes the formation of protein-ubiquitin conjugates that are subsequently degraded by the 26S proteasome. Has a role in promoting metaphase to anaphase transition via the ubiquitination of specific mitotic substrates. The protein is Anaphase-promoting complex subunit 4 (cut20) of Schizosaccharomyces pombe (strain 972 / ATCC 24843) (Fission yeast).